The primary structure comprises 407 residues: Serine/threonine transporter SstT (407 aa).

9 helical membrane-spanning segments follow: residues 10-30, 42-62, 81-101, 141-161, 179-199, 218-238, 245-267, 288-308, and 316-336; these read AKGNLIIQICAGIALGILIGI, LGILFTSALKAIAPMLVFILI, IIILYIVGTFLASACAILANF, ALSSGNYLGILTWAIAGGAAL, VLKIVKFVVKLAPFGIFGLVA, ILLVATMLFVTFVINALIVFF, FPLIFICLRHSAFFAFFTRSSAA, ISIPLGATINMAGAAVTIAIL, and VGIEISLLQAFLLSIIATFAA.

Belongs to the dicarboxylate/amino acid:cation symporter (DAACS) (TC 2.A.23) family.

The protein resides in the cell inner membrane. The enzyme catalyses L-serine(in) + Na(+)(in) = L-serine(out) + Na(+)(out). It catalyses the reaction L-threonine(in) + Na(+)(in) = L-threonine(out) + Na(+)(out). Its function is as follows. Involved in the import of serine and threonine into the cell, with the concomitant import of sodium (symport system). The polypeptide is Serine/threonine transporter SstT (Campylobacter jejuni subsp. doylei (strain ATCC BAA-1458 / RM4099 / 269.97)).